Here is a 466-residue protein sequence, read N- to C-terminus: UDP-N-acetylmuramoylalanine--D-glutamate ligase (466 aa).

ATP is bound at residue 127 to 133 (GSNGKST).

It belongs to the MurCDEF family.

It is found in the cytoplasm. It catalyses the reaction UDP-N-acetyl-alpha-D-muramoyl-L-alanine + D-glutamate + ATP = UDP-N-acetyl-alpha-D-muramoyl-L-alanyl-D-glutamate + ADP + phosphate + H(+). It participates in cell wall biogenesis; peptidoglycan biosynthesis. Functionally, cell wall formation. Catalyzes the addition of glutamate to the nucleotide precursor UDP-N-acetylmuramoyl-L-alanine (UMA). This chain is UDP-N-acetylmuramoylalanine--D-glutamate ligase, found in Ruegeria pomeroyi (strain ATCC 700808 / DSM 15171 / DSS-3) (Silicibacter pomeroyi).